A 955-amino-acid chain; its full sequence is Eukaryotic translation initiation factor 3 subunit A (955 aa).

A coiled-coil region spans residues Leu96–Thr127. Residues Tyr325–Ala498 enclose the PCI domain. 2 coiled-coil regions span residues Ala533 to Lys636 and Lys752 to Gly860. The span at Arg789–Arg858 shows a compositional bias: basic and acidic residues. The segment at Arg789 to Asn955 is disordered.

This sequence belongs to the eIF-3 subunit A family. As to quaternary structure, component of the eukaryotic translation initiation factor 3 (eIF-3) complex.

The protein resides in the cytoplasm. Functionally, RNA-binding component of the eukaryotic translation initiation factor 3 (eIF-3) complex, which is involved in protein synthesis of a specialized repertoire of mRNAs and, together with other initiation factors, stimulates binding of mRNA and methionyl-tRNAi to the 40S ribosome. The eIF-3 complex specifically targets and initiates translation of a subset of mRNAs involved in cell proliferation. This chain is Eukaryotic translation initiation factor 3 subunit A, found in Yarrowia lipolytica (strain CLIB 122 / E 150) (Yeast).